Consider the following 421-residue polypeptide: Glutamate-1-semialdehyde 2,1-aminomutase 1 (421 aa).

Position 258 is an N6-(pyridoxal phosphate)lysine (K258).

This sequence belongs to the class-III pyridoxal-phosphate-dependent aminotransferase family. HemL subfamily. Requires pyridoxal 5'-phosphate as cofactor.

The protein localises to the cytoplasm. It carries out the reaction (S)-4-amino-5-oxopentanoate = 5-aminolevulinate. Its pathway is porphyrin-containing compound metabolism; protoporphyrin-IX biosynthesis; 5-aminolevulinate from L-glutamyl-tRNA(Glu): step 2/2. The protein is Glutamate-1-semialdehyde 2,1-aminomutase 1 of Cenarchaeum symbiosum (strain A).